The sequence spans 214 residues: Quinolone resistance pentapeptide repeat protein QnrB96 (214 aa).

Pentapeptide repeat domains lie at 23–103 (STFH…SFMN) and 116–189 (ITNT…VRGV).

Belongs to the pentapeptide repeat protein family.

Functionally, confers reduced sensitivity to the fluoroquinolone antibiotic ciprofloxacin (five-fold increase in minimum inhibitory concentration) when expressed in E.coli. This is Quinolone resistance pentapeptide repeat protein QnrB96 from Scandinavium goeteborgense.